The sequence spans 504 residues: ATP synthase subunit alpha 2 (504 aa).

169-176 (GDRQTGKT) contacts ATP.

Belongs to the ATPase alpha/beta chains family. F-type ATPases have 2 components, CF(1) - the catalytic core - and CF(0) - the membrane proton channel. CF(1) has five subunits: alpha(3), beta(3), gamma(1), delta(1), epsilon(1). CF(0) has three main subunits: a(1), b(2) and c(9-12). The alpha and beta chains form an alternating ring which encloses part of the gamma chain. CF(1) is attached to CF(0) by a central stalk formed by the gamma and epsilon chains, while a peripheral stalk is formed by the delta and b chains.

It is found in the cell membrane. The enzyme catalyses ATP + H2O + 4 H(+)(in) = ADP + phosphate + 5 H(+)(out). Functionally, produces ATP from ADP in the presence of a proton gradient across the membrane. The alpha chain is a regulatory subunit. This is ATP synthase subunit alpha 2 from Listeria welshimeri serovar 6b (strain ATCC 35897 / DSM 20650 / CCUG 15529 / CIP 8149 / NCTC 11857 / SLCC 5334 / V8).